Here is a 291-residue protein sequence, read N- to C-terminus: MRVVRTIAEMQAICRTLHREGKSIGLVPTMGALHAGHISLVRTARTQNDSVVVSIFVNPIQFGPNEDLAKYPRTFEQDCAQLDHEGVDFVFSPGVEEMYPEGTATFVHVDGLSEKLDGRSRPGHFKGVTTVVSKLFHIIPADHAYFGQKDAAQVAVIRKMVRDQNFDIDLMICPIVREKDGLALSSRNAYLDPTQRQQALVLHRALMRVQMLADTGHTDAYYLAEAGRAVIAEEPGAKLDYLEIVDPNTLEPITEIGKGALVAVAAQIGNTRLIDNLVLQAAGNARGPRTS.

Met30–His37 lines the ATP pocket. Catalysis depends on His37, which acts as the Proton donor. Gln61 is a (R)-pantoate binding site. Gln61 contributes to the beta-alanine binding site. Gly147 to Asp150 is a binding site for ATP. Gln153 serves as a coordination point for (R)-pantoate. ATP is bound by residues Val176 and Leu184–Arg187.

This sequence belongs to the pantothenate synthetase family. In terms of assembly, homodimer.

The protein localises to the cytoplasm. It carries out the reaction (R)-pantoate + beta-alanine + ATP = (R)-pantothenate + AMP + diphosphate + H(+). It participates in cofactor biosynthesis; (R)-pantothenate biosynthesis; (R)-pantothenate from (R)-pantoate and beta-alanine: step 1/1. Functionally, catalyzes the condensation of pantoate with beta-alanine in an ATP-dependent reaction via a pantoyl-adenylate intermediate. The protein is Pantothenate synthetase of Koribacter versatilis (strain Ellin345).